Consider the following 673-residue polypeptide: UvrABC system protein B (673 aa).

In terms of domain architecture, Helicase ATP-binding spans 26–414 (EGLEDGLAHQ…GGDVVDQVVR (389 aa)). 39 to 46 (GVTGSGKT) is an ATP binding site. Residues 92 to 115 (YYDYYQPEAYVPSSDTFIEKDASV) carry the Beta-hairpin motif. Positions 431 to 597 (QVDDLLSEIR…GLNKKVVDIL (167 aa)) constitute a Helicase C-terminal domain. Positions 633–668 (LQKIHELEGLMMQHAQNLEFEEAAQIRDQLHQLREL) constitute a UVR domain.

This sequence belongs to the UvrB family. As to quaternary structure, forms a heterotetramer with UvrA during the search for lesions. Interacts with UvrC in an incision complex.

Its subcellular location is the cytoplasm. The UvrABC repair system catalyzes the recognition and processing of DNA lesions. A damage recognition complex composed of 2 UvrA and 2 UvrB subunits scans DNA for abnormalities. Upon binding of the UvrA(2)B(2) complex to a putative damaged site, the DNA wraps around one UvrB monomer. DNA wrap is dependent on ATP binding by UvrB and probably causes local melting of the DNA helix, facilitating insertion of UvrB beta-hairpin between the DNA strands. Then UvrB probes one DNA strand for the presence of a lesion. If a lesion is found the UvrA subunits dissociate and the UvrB-DNA preincision complex is formed. This complex is subsequently bound by UvrC and the second UvrB is released. If no lesion is found, the DNA wraps around the other UvrB subunit that will check the other stand for damage. This chain is UvrABC system protein B, found in Shigella dysenteriae serotype 1 (strain Sd197).